The sequence spans 360 residues: Peptide chain release factor 1 (360 aa).

At Gln235 the chain carries N5-methylglutamine. The interval 285–313 (KRQQAEASTRRNLLGSGDRSDRNRTYNFP) is disordered.

This sequence belongs to the prokaryotic/mitochondrial release factor family. In terms of processing, methylated by PrmC. Methylation increases the termination efficiency of RF1.

The protein resides in the cytoplasm. Functionally, peptide chain release factor 1 directs the termination of translation in response to the peptide chain termination codons UAG and UAA. The protein is Peptide chain release factor 1 of Enterobacter sp. (strain 638).